The chain runs to 452 residues: Cobyrinate a,c-diamide synthase (452 aa).

A GATase cobBQ-type domain is found at 246–439 (TLAYALDDAF…LHVHFYQDEQ (194 aa)). Cys-328 acts as the Nucleophile in catalysis.

Belongs to the CobB/CbiA family. The cofactor is Mg(2+).

The catalysed reaction is cob(II)yrinate + 2 L-glutamine + 2 ATP + 2 H2O = cob(II)yrinate a,c diamide + 2 L-glutamate + 2 ADP + 2 phosphate + 2 H(+). The protein operates within cofactor biosynthesis; adenosylcobalamin biosynthesis; cob(II)yrinate a,c-diamide from sirohydrochlorin (anaerobic route): step 10/10. In terms of biological role, catalyzes the ATP-dependent amidation of the two carboxylate groups at positions a and c of cobyrinate, using either L-glutamine or ammonia as the nitrogen source. This chain is Cobyrinate a,c-diamide synthase, found in Streptococcus sanguinis (strain SK36).